The primary structure comprises 857 residues: Leucine--tRNA ligase (857 aa).

The 'HIGH' region motif lies at 42–52 (PYPSGRLHMGH). Residues 617–621 (KMSKS) carry the 'KMSKS' region motif. Residue K620 coordinates ATP.

The protein belongs to the class-I aminoacyl-tRNA synthetase family.

The protein resides in the cytoplasm. It carries out the reaction tRNA(Leu) + L-leucine + ATP = L-leucyl-tRNA(Leu) + AMP + diphosphate. This is Leucine--tRNA ligase from Vibrio parahaemolyticus serotype O3:K6 (strain RIMD 2210633).